The following is a 101-amino-acid chain: Small ribosomal subunit protein uS14 (101 aa).

Belongs to the universal ribosomal protein uS14 family. Part of the 30S ribosomal subunit. Contacts proteins S3 and S10.

In terms of biological role, binds 16S rRNA, required for the assembly of 30S particles and may also be responsible for determining the conformation of the 16S rRNA at the A site. The chain is Small ribosomal subunit protein uS14 from Buchnera aphidicola subsp. Baizongia pistaciae (strain Bp).